A 129-amino-acid polypeptide reads, in one-letter code: Capsid protein (129 aa).

Positions 31–104 (EWISSNSRSQ…FATNSDCELI (74 aa)) are viral RNA-binding.

It belongs to the Leviviricetes capsid protein family. In terms of assembly, homodimer. The capsid proteins form dimers that assemble by group of 5. Twelve such pentamers are linked together with free dimers. The homodimers binds to the viral RNA via an operator hairpin, but also to many other RNA sequences in the viral genome; this interaction probably shifts the virus from the replicative to the assembly phase and ensures specific encapsidation of the viral genome.

The protein resides in the virion. Capsid protein self-assembles to form an icosahedral capsid with a T=3 symmetry, about 26 nm in diameter, and consisting of 89 capsid proteins dimers (178 capsid proteins). Involved in viral genome encapsidation through the interaction between a capsid protein dimer and the multiple packaging signals present in the RNA genome. The capsid also contains 1 copy of the A2 maturation protein. In terms of biological role, acts as a translational repressor of viral replicase synthesis late in infection. This latter function is the result of capsid protein interaction with an RNA hairpin which contains the replicase ribosome-binding site. The sequence is that of Capsid protein from Escherichia coli (Bacteriophage R17).